A 107-amino-acid polypeptide reads, in one-letter code: Age-related maculopathy susceptibility protein 2 (107 aa).

The disordered stretch occupies residues Met-1–Met-21.

In terms of tissue distribution, detected in retina and placenta.

It is found in the cytoplasm. The chain is Age-related maculopathy susceptibility protein 2 (ARMS2) from Homo sapiens (Human).